The following is a 154-amino-acid chain: Myoglobin (154 aa).

The Globin domain maps to 2-148; sequence GLSDGEWQLV…FRNDMAAKYK (147 aa). Ser4 carries the post-translational modification Phosphoserine. Position 65 (His65) interacts with nitrite. His65 contacts O2. Thr68 is subject to Phosphothreonine. His94 is a heme b binding site.

This sequence belongs to the globin family. Monomeric.

The protein resides in the cytoplasm. Its subcellular location is the sarcoplasm. The catalysed reaction is Fe(III)-heme b-[protein] + nitric oxide + H2O = Fe(II)-heme b-[protein] + nitrite + 2 H(+). It carries out the reaction H2O2 + AH2 = A + 2 H2O. Functionally, monomeric heme protein which primary function is to store oxygen and facilitate its diffusion within muscle tissues. Reversibly binds oxygen through a pentacoordinated heme iron and enables its timely and efficient release as needed during periods of heightened demand. Depending on the oxidative conditions of tissues and cells, and in addition to its ability to bind oxygen, it also has a nitrite reductase activity whereby it regulates the production of bioactive nitric oxide. Under stress conditions, like hypoxia and anoxia, it also protects cells against reactive oxygen species thanks to its pseudoperoxidase activity. This chain is Myoglobin (MB), found in Sapajus apella (Brown-capped capuchin).